Consider the following 361-residue polypeptide: Cytochrome P450 family protein EryCII (361 aa).

This sequence belongs to the cytochrome P450 family. Heterotetramer composed of EryCII and EryCIII.

The protein operates within antibiotic biosynthesis; erythromycin biosynthesis. Its function is as follows. Involved in the erythromycin biosynthesis pathway. Acts by forming a complex and stabilizing the desosaminyl transferase EryCIII. The sequence is that of Cytochrome P450 family protein EryCII (eryCII) from Saccharopolyspora erythraea (strain ATCC 11635 / DSM 40517 / JCM 4748 / NBRC 13426 / NCIMB 8594 / NRRL 2338).